The following is a 440-amino-acid chain: Chromosome partition protein MukF (440 aa).

The tract at residues 208–236 is leucine-zipper; sequence LSETSGTLRELQDTLEAAGDKLQANLLRI.

It belongs to the MukF family. As to quaternary structure, interacts, and probably forms a ternary complex, with MukE and MukB via its C-terminal region. The complex formation is stimulated by calcium or magnesium. It is required for an interaction between MukE and MukB.

It is found in the cytoplasm. It localises to the nucleoid. Functionally, involved in chromosome condensation, segregation and cell cycle progression. May participate in facilitating chromosome segregation by condensation DNA from both sides of a centrally located replisome during cell division. Not required for mini-F plasmid partitioning. Probably acts via its interaction with MukB and MukE. Overexpression results in anucleate cells. It has a calcium binding activity. The polypeptide is Chromosome partition protein MukF (Salmonella gallinarum (strain 287/91 / NCTC 13346)).